A 466-amino-acid polypeptide reads, in one-letter code: Ribulose bisphosphate carboxylase large chain (466 aa).

Lys-4 carries the post-translational modification N6,N6,N6-trimethyllysine. 2 residues coordinate substrate: Asn-113 and Thr-163. Lys-165 (proton acceptor) is an active-site residue. Lys-167 serves as a coordination point for substrate. Mg(2+) contacts are provided by Lys-191, Asp-193, and Glu-194. Lys-191 bears the N6-carboxylysine mark. The Proton acceptor role is filled by His-284. Substrate contacts are provided by Arg-285, His-317, and Ser-369.

The protein belongs to the RuBisCO large chain family. Type I subfamily. Heterohexadecamer of 8 large chains and 8 small chains; disulfide-linked. The disulfide link is formed within the large subunit homodimers. Mg(2+) serves as cofactor. The disulfide bond which can form in the large chain dimeric partners within the hexadecamer appears to be associated with oxidative stress and protein turnover.

The protein localises to the plastid. Its subcellular location is the chloroplast. The catalysed reaction is 2 (2R)-3-phosphoglycerate + 2 H(+) = D-ribulose 1,5-bisphosphate + CO2 + H2O. The enzyme catalyses D-ribulose 1,5-bisphosphate + O2 = 2-phosphoglycolate + (2R)-3-phosphoglycerate + 2 H(+). Functionally, ruBisCO catalyzes two reactions: the carboxylation of D-ribulose 1,5-bisphosphate, the primary event in carbon dioxide fixation, as well as the oxidative fragmentation of the pentose substrate in the photorespiration process. Both reactions occur simultaneously and in competition at the same active site. The polypeptide is Ribulose bisphosphate carboxylase large chain (Nelsonia canescens (Blue pussyleaf)).